The sequence spans 256 residues: MSGFNFEVMVPEQGGKVVFSLTETGSCVSFYGDDEPGEGSCELASENMDFPSCPLGNGDDFCLSLALSTMRWSGMTKRNNFMDRFIGSFVHCTPVMIWSYGNLSKKSHHKMVCHTCPDEYKFSDKDEMQGYYEECLEASTDIFLDELATVVTGGFFPVGLKGSWGGWYLKYVRYAGPLAGSSGFIVNQRFYDRAQNKTGSRVVSMVEMDGDGLSFIYEKPSVYHSDGCTGSAARFWKRDHNERAGVELRAGLHFRM.

It is found in the host cytoplasm. The protein resides in the host perinuclear region. In terms of biological role, plays a role in inhibition of the host innate immune system by counteracting the type I interferon signaling. The sequence is that of Non-structural protein 1 from Infectious salmon anemia virus (isolate Atlantic salmon/Norway/810/9/99) (ISAV).